Here is a 354-residue protein sequence, read N- to C-terminus: Mating-type protein MAT-1 (354 aa).

A DNA-binding region (alpha box) is located at residues 60-117; the sequence is KAKKALNAFVGFRCYYIAIPAFKQWPMKKLSNLISLLWDRDPNKSLWSLMAKAWSNIR.

It belongs to the MATALPHA1 family.

The protein localises to the nucleus. Its function is as follows. Mating type proteins are sequence specific DNA-binding proteins that act as master switches in fungal differentiation by controlling gene expression in a cell type-specific fashion. Transcriptional activator that induces the transcription of alpha-specific genes. This Cochliobolus cymbopogonis (Curvularia cymbopogonis) protein is Mating-type protein MAT-1 (MAT1).